We begin with the raw amino-acid sequence, 235 residues long: Tumor necrosis factor (235 aa).

Topologically, residues M1–L35 are cytoplasmic. Position 2 is a phosphoserine; by CK1 (S2). 2 N6-myristoyl lysine lipidation sites follow: K19 and K20. A helical; Signal-anchor for type II membrane protein transmembrane segment spans residues F36–I56. The Extracellular segment spans residues G57–L235. O-linked (GalNAc...) serine; in soluble form glycosylation occurs at S83. A glycan (N-linked (GlcNAc...) asparagine) is linked at N86. One can recognise a THD domain in the interval P91–L235. An intrachain disulfide couples C148 to C179.

It belongs to the tumor necrosis factor family. As to quaternary structure, homotrimer. Interacts with SPPL2B. Post-translationally, the soluble form derives from the membrane form by proteolytic processing. The membrane-bound form is further proteolytically processed by SPPL2A or SPPL2B through regulated intramembrane proteolysis producing TNF intracellular domains (ICD1 and ICD2) released in the cytosol and TNF C-domain 1 and C-domain 2 secreted into the extracellular space. In terms of processing, the membrane form, but not the soluble form, is phosphorylated on serine residues. Dephosphorylation of the membrane form occurs by binding to soluble TNFRSF1A/TNFR1. O-glycosylated; glycans contain galactose, N-acetylgalactosamine and N-acetylneuraminic acid. Post-translationally, the soluble form is demyristoylated by SIRT6, promoting its secretion.

The protein resides in the cell membrane. It is found in the membrane. It localises to the secreted. Its function is as follows. Cytokine that binds to TNFRSF1A/TNFR1 and TNFRSF1B/TNFBR. It is mainly secreted by macrophages and can induce cell death of certain tumor cell lines. It is potent pyrogen causing fever by direct action or by stimulation of interleukin-1 secretion and is implicated in the induction of cachexia, Under certain conditions it can stimulate cell proliferation and induce cell differentiation. Induces insulin resistance in adipocytes via inhibition of insulin-induced IRS1 tyrosine phosphorylation and insulin-induced glucose uptake. Induces GKAP42 protein degradation in adipocytes which is partially responsible for TNF-induced insulin resistance. Plays a role in angiogenesis by inducing VEGF production synergistically with IL1B and IL6. Promotes osteoclastogenesis and therefore mediates bone resorption. The TNF intracellular domain (ICD) form induces IL12 production in dendritic cells. The chain is Tumor necrosis factor (TNF) from Peromyscus leucopus (White-footed mouse).